The sequence spans 326 residues: Glyoxylate/hydroxypyruvate reductase B (326 aa).

Active-site residues include Arg-237 and Glu-266. His-285 (proton donor) is an active-site residue.

It belongs to the D-isomer specific 2-hydroxyacid dehydrogenase family. GhrB subfamily. As to quaternary structure, homodimer.

The protein localises to the cytoplasm. The enzyme catalyses glycolate + NADP(+) = glyoxylate + NADPH + H(+). It catalyses the reaction (R)-glycerate + NAD(+) = 3-hydroxypyruvate + NADH + H(+). It carries out the reaction (R)-glycerate + NADP(+) = 3-hydroxypyruvate + NADPH + H(+). Its function is as follows. Catalyzes the NADPH-dependent reduction of glyoxylate and hydroxypyruvate into glycolate and glycerate, respectively. The protein is Glyoxylate/hydroxypyruvate reductase B of Yersinia pseudotuberculosis serotype O:1b (strain IP 31758).